The following is a 34-amino-acid chain: Photosystem I reaction center subunit XII (34 aa).

Residues Leu-9–Ile-29 traverse the membrane as a helical segment.

Belongs to the PsaM family.

The protein resides in the cellular thylakoid membrane. The polypeptide is Photosystem I reaction center subunit XII (Prochlorococcus marinus (strain MIT 9312)).